The sequence spans 119 residues: Ribonuclease P protein component (119 aa).

It belongs to the RnpA family. Consists of a catalytic RNA component (M1 or rnpB) and a protein subunit.

The enzyme catalyses Endonucleolytic cleavage of RNA, removing 5'-extranucleotides from tRNA precursor.. RNaseP catalyzes the removal of the 5'-leader sequence from pre-tRNA to produce the mature 5'-terminus. It can also cleave other RNA substrates such as 4.5S RNA. The protein component plays an auxiliary but essential role in vivo by binding to the 5'-leader sequence and broadening the substrate specificity of the ribozyme. This Syntrophomonas wolfei subsp. wolfei (strain DSM 2245B / Goettingen) protein is Ribonuclease P protein component.